Reading from the N-terminus, the 121-residue chain is Large ribosomal subunit protein bL12 (121 aa).

The protein belongs to the bacterial ribosomal protein bL12 family. In terms of assembly, homodimer. Part of the ribosomal stalk of the 50S ribosomal subunit. Forms a multimeric L10(L12)X complex, where L10 forms an elongated spine to which 2 to 4 L12 dimers bind in a sequential fashion. Binds GTP-bound translation factors.

Forms part of the ribosomal stalk which helps the ribosome interact with GTP-bound translation factors. Is thus essential for accurate translation. The chain is Large ribosomal subunit protein bL12 from Shewanella piezotolerans (strain WP3 / JCM 13877).